Here is a 199-residue protein sequence, read N- to C-terminus: Holliday junction branch migration complex subunit RuvA (199 aa).

Residues 1-63 (MIDYIKGNLV…EDSQRLFGFT (63 aa)) are domain I. The segment at 64–142 (TRTERLLFEK…DMAPMLEPAA (79 aa)) is domain II. The interval 143 to 153 (GADKQQKNPQL) is flexible linker. The interval 153–199 (LEDALEALRALGYVEKELKKVEKQLKAETLETDEYIRRALALMLKRP) is domain III.

The protein belongs to the RuvA family. As to quaternary structure, homotetramer. Forms an RuvA(8)-RuvB(12)-Holliday junction (HJ) complex. HJ DNA is sandwiched between 2 RuvA tetramers; dsDNA enters through RuvA and exits via RuvB. An RuvB hexamer assembles on each DNA strand where it exits the tetramer. Each RuvB hexamer is contacted by two RuvA subunits (via domain III) on 2 adjacent RuvB subunits; this complex drives branch migration. In the full resolvosome a probable DNA-RuvA(4)-RuvB(12)-RuvC(2) complex forms which resolves the HJ.

The protein resides in the cytoplasm. The RuvA-RuvB-RuvC complex processes Holliday junction (HJ) DNA during genetic recombination and DNA repair, while the RuvA-RuvB complex plays an important role in the rescue of blocked DNA replication forks via replication fork reversal (RFR). RuvA specifically binds to HJ cruciform DNA, conferring on it an open structure. The RuvB hexamer acts as an ATP-dependent pump, pulling dsDNA into and through the RuvAB complex. HJ branch migration allows RuvC to scan DNA until it finds its consensus sequence, where it cleaves and resolves the cruciform DNA. This Shouchella clausii (strain KSM-K16) (Alkalihalobacillus clausii) protein is Holliday junction branch migration complex subunit RuvA.